We begin with the raw amino-acid sequence, 263 residues long: Putative methyltransferase DDB_G0268948 (263 aa).

It belongs to the methyltransferase superfamily.

This chain is Putative methyltransferase DDB_G0268948, found in Dictyostelium discoideum (Social amoeba).